Consider the following 341-residue polypeptide: HTH-type transcriptional repressor PurR (341 aa).

The region spanning 2–56 is the HTH lacI-type domain; that stretch reads ATIKDVAKRAGVSTTTVSHVINKTRFVAEETKAAVRAAIKELHYSPSAVARSLKV. Positions 4 to 23 form a DNA-binding region, H-T-H motif; it reads IKDVAKRAGVSTTTVSHVIN. Residues 48 to 56 mediate DNA binding; it reads SAVARSLKV. Tyr73, Arg190, Thr192, Phe221, and Asp275 together coordinate hypoxanthine.

Homodimer.

Its pathway is purine metabolism; purine nucleotide biosynthesis [regulation]. Is the main repressor of the genes involved in the de novo synthesis of purine nucleotides, regulating purB, purC, purEK, purF, purHD, purL, purMN and guaBA expression. PurR is allosterically activated to bind its cognate DNA by binding the purine corepressors, hypoxanthine or guanine, thereby effecting transcription repression. In Pectobacterium carotovorum subsp. carotovorum (strain PC1), this protein is HTH-type transcriptional repressor PurR.